We begin with the raw amino-acid sequence, 252 residues long: Trans-aconitate 2-methyltransferase (252 aa).

The protein belongs to the methyltransferase superfamily. Tam family.

It localises to the cytoplasm. It carries out the reaction trans-aconitate + S-adenosyl-L-methionine = (E)-3-(methoxycarbonyl)pent-2-enedioate + S-adenosyl-L-homocysteine. Its function is as follows. Catalyzes the S-adenosylmethionine monomethyl esterification of trans-aconitate. The polypeptide is Trans-aconitate 2-methyltransferase (Shigella flexneri serotype 5b (strain 8401)).